A 173-amino-acid polypeptide reads, in one-letter code: Putative pre-16S rRNA nuclease (173 aa).

The protein belongs to the YqgF nuclease family.

It localises to the cytoplasm. In terms of biological role, could be a nuclease involved in processing of the 5'-end of pre-16S rRNA. This is Putative pre-16S rRNA nuclease from Rhodopirellula baltica (strain DSM 10527 / NCIMB 13988 / SH1).